The chain runs to 236 residues: Biosynthetic peptidoglycan transglycosylase (236 aa).

Residues 12–31 (ALLWFAAGSIAVVLVLRWVP) traverse the membrane as a helical segment.

This sequence belongs to the glycosyltransferase 51 family.

It is found in the cell inner membrane. It carries out the reaction [GlcNAc-(1-&gt;4)-Mur2Ac(oyl-L-Ala-gamma-D-Glu-L-Lys-D-Ala-D-Ala)](n)-di-trans,octa-cis-undecaprenyl diphosphate + beta-D-GlcNAc-(1-&gt;4)-Mur2Ac(oyl-L-Ala-gamma-D-Glu-L-Lys-D-Ala-D-Ala)-di-trans,octa-cis-undecaprenyl diphosphate = [GlcNAc-(1-&gt;4)-Mur2Ac(oyl-L-Ala-gamma-D-Glu-L-Lys-D-Ala-D-Ala)](n+1)-di-trans,octa-cis-undecaprenyl diphosphate + di-trans,octa-cis-undecaprenyl diphosphate + H(+). The protein operates within cell wall biogenesis; peptidoglycan biosynthesis. Peptidoglycan polymerase that catalyzes glycan chain elongation from lipid-linked precursors. The protein is Biosynthetic peptidoglycan transglycosylase of Pseudomonas entomophila (strain L48).